A 449-amino-acid polypeptide reads, in one-letter code: DNA-directed RNA polymerase subunit Rpo1C (449 aa).

The segment at 1-68 is unknown; that stretch reads MQDVIKKIED…EGEELLKAVE (68 aa). A DNA-directed RNA polymerase subunit Rpo1C region spans residues 69-449; it reads DEYLRILKVR…TGSVSVIMKK (381 aa).

Belongs to the RNA polymerase beta' chain family. In terms of assembly, part of the RNA polymerase complex.

It localises to the cytoplasm. It catalyses the reaction RNA(n) + a ribonucleoside 5'-triphosphate = RNA(n+1) + diphosphate. In terms of biological role, DNA-dependent RNA polymerase (RNAP) catalyzes the transcription of DNA into RNA using the four ribonucleoside triphosphates as substrates. Forms part of the jaw domain. This Methanothermobacter thermautotrophicus (strain Winter) (Methanobacterium thermoautotrophicum) protein is DNA-directed RNA polymerase subunit Rpo1C.